The following is a 490-amino-acid chain: Bifunctional protein HldE (490 aa).

A ribokinase region spans residues 1-328 (MFSFDALLQA…LRRRILPHAS (328 aa)). 205 to 208 (NRKE) is a binding site for ATP. Residue aspartate 275 is part of the active site. Residues 358 to 490 (FTNGCFDILH…LVARAREGQS (133 aa)) form a cytidylyltransferase region.

In the N-terminal section; belongs to the carbohydrate kinase PfkB family. It in the C-terminal section; belongs to the cytidylyltransferase family. As to quaternary structure, homodimer.

The enzyme catalyses D-glycero-beta-D-manno-heptose 7-phosphate + ATP = D-glycero-beta-D-manno-heptose 1,7-bisphosphate + ADP + H(+). It carries out the reaction D-glycero-beta-D-manno-heptose 1-phosphate + ATP + H(+) = ADP-D-glycero-beta-D-manno-heptose + diphosphate. Its pathway is nucleotide-sugar biosynthesis; ADP-L-glycero-beta-D-manno-heptose biosynthesis; ADP-L-glycero-beta-D-manno-heptose from D-glycero-beta-D-manno-heptose 7-phosphate: step 1/4. It functions in the pathway nucleotide-sugar biosynthesis; ADP-L-glycero-beta-D-manno-heptose biosynthesis; ADP-L-glycero-beta-D-manno-heptose from D-glycero-beta-D-manno-heptose 7-phosphate: step 3/4. Functionally, catalyzes the phosphorylation of D-glycero-D-manno-heptose 7-phosphate at the C-1 position to selectively form D-glycero-beta-D-manno-heptose-1,7-bisphosphate. In terms of biological role, catalyzes the ADP transfer from ATP to D-glycero-beta-D-manno-heptose 1-phosphate, yielding ADP-D-glycero-beta-D-manno-heptose. The polypeptide is Bifunctional protein HldE (Rhodopseudomonas palustris (strain TIE-1)).